The primary structure comprises 150 residues: Ribosomal RNA large subunit methyltransferase H (150 aa).

S-adenosyl-L-methionine is bound by residues Ala100 and 118-123 (LSEMTF).

This sequence belongs to the RNA methyltransferase RlmH family. As to quaternary structure, homodimer.

The protein resides in the cytoplasm. The catalysed reaction is pseudouridine(1915) in 23S rRNA + S-adenosyl-L-methionine = N(3)-methylpseudouridine(1915) in 23S rRNA + S-adenosyl-L-homocysteine + H(+). Its function is as follows. Specifically methylates the pseudouridine at position 1915 (m3Psi1915) in 23S rRNA. The sequence is that of Ribosomal RNA large subunit methyltransferase H from Helicobacter pylori (strain ATCC 700392 / 26695) (Campylobacter pylori).